The chain runs to 701 residues: Aryl hydrocarbon receptor repressor (701 aa).

Residues 1–38 are disordered; sequence MMIPSGECTYAGRKRRKPIQKRRLTMGTEKSNPSKRHR. Basic residues predominate over residues 12 to 24; the sequence is GRKRRKPIQKRRL. One can recognise a bHLH domain in the interval 25–78; it reads TMGTEKSNPSKRHRDRLNTELDHLASLLPFSPDIISKLDKLSVLRLSVSYLRVK. Positions 106–176 constitute a PAS domain; the sequence is PVQEGRLLLE…RQLHWAMDPP (71 aa). 2 disordered regions span residues 360 to 389 and 409 to 436; these read DPKG…QREM and TEQR…LVPH. Positions 365-375 are enriched in basic and acidic residues; sequence SGDREEDDQKH. The span at 414–430 shows a compositional bias: polar residues; that stretch reads QEGTTKLTRQPSKSEPS. Residues 555–701 form a needed for transcriptional repression region; it reads ASTTSCVWLG…SKGSDGIFLP (147 aa). Residues lysine 583 and lysine 660 each participate in a glycyl lysine isopeptide (Lys-Gly) (interchain with G-Cter in SUMO2) cross-link.

In terms of assembly, interacts with ARNT, ANKRA2, HDAC4 and HDAC5. Interacts with ARNT; forms a heterodimer with ARNT. In terms of tissue distribution, highly expressed in testis and weakly expressed in heart and liver. Highly expressed in small intestine and cecum in a male-dominant sexual dimorphic fashion.

It is found in the cytoplasm. Its subcellular location is the nucleus. Mediates dioxin toxicity and is involved in regulation of cell growth and differentiation. Represses the transcription activity of AHR by competing with this transcription factor for heterodimer formation with the ARNT and subsequently binding to the xenobiotic response element (XRE) sequence present in the promoter regulatory region of variety of genes. Represses CYP1A1 by binding the XRE sequence and recruiting ANKRA2, HDAC4 and/or HDAC5. Autoregulates its expression by associating with its own XRE site. In Rattus norvegicus (Rat), this protein is Aryl hydrocarbon receptor repressor (Ahrr).